Consider the following 624-residue polypeptide: NADPH-dependent diflavin oxidoreductase 1 (624 aa).

Positions 6–168 (IVILYGSETG…VYYEFEKRII (163 aa)) constitute a Flavodoxin-like domain. FMN-binding positions include 12-17 (SETGNA), 59-62 (STTG), 106-115 (LGDSSYPRFN), and E142. The FAD-binding FR-type domain maps to 226–474 (ETIRHGTVKK…LQNNHLLHED (249 aa)). FAD is bound by residues R384, 414–417 (RFYS), and 446–449 (GLCT). NADP(+) is bound by residues 539 to 540 (SR) and 548 to 552 (AKYVQ). W624 provides a ligand contact to FAD.

It belongs to the NADPH-dependent diflavin oxidoreductase NDOR1 family. The protein in the N-terminal section; belongs to the flavodoxin family. In the C-terminal section; belongs to the flavoprotein pyridine nucleotide cytochrome reductase family. Interacts with DRE2; as part of the cytosolic iron-sulfur (Fe-S) protein assembly (CIA) machinery. Requires FAD as cofactor. It depends on FMN as a cofactor.

Its subcellular location is the cytoplasm. It localises to the mitochondrion. It catalyses the reaction 2 oxidized [2Fe-2S]-[protein] + NADPH = 2 reduced [2Fe-2S]-[protein] + NADP(+) + H(+). NADPH-dependent reductase which is a central component of the cytosolic iron-sulfur (Fe-S) protein assembly (CIA) machinery. Transfers electrons from NADPH via its FAD and FMN prosthetic groups to the [2Fe-2S] cluster of DRE2, another key component of the CIA machinery. In turn, this reduced cluster provides electrons for assembly of cytosolic iron-sulfur cluster proteins. Positively controls H(2)O(2)-induced cell death. This is NADPH-dependent diflavin oxidoreductase 1 from Kluyveromyces lactis (strain ATCC 8585 / CBS 2359 / DSM 70799 / NBRC 1267 / NRRL Y-1140 / WM37) (Yeast).